The primary structure comprises 152 residues: Adenosine 5'-monophosphoramidase HNT1 (152 aa).

Positions 8–119 (IFCKIIKGEI…IPKKDEATGL (112 aa)) constitute an HIT domain. AMP is bound by residues 33–34 (DI), Asn93, 99–101 (HQV), and 106–108 (HFH). The Histidine triad motif motif lies at 104–108 (HVHFH). Catalysis depends on His106, which acts as the Tele-AMP-histidine intermediate.

The protein belongs to the HINT family. Homodimer. It depends on Mg(2+) as a cofactor.

The catalysed reaction is adenosine 5'-phosphoramidate + H2O = AMP + NH4(+). In terms of biological role, hydrolyzes adenosine 5'-monophosphoramidate substrates such as AMP-morpholidate, AMP-N-alanine methyl ester, AMP-alpha-acetyl lysine methyl ester and AMP-NH2. In Candida albicans (strain SC5314 / ATCC MYA-2876) (Yeast), this protein is Adenosine 5'-monophosphoramidase HNT1.